The chain runs to 324 residues: MSYFKTALLLAGLTALFMGVGYLIGGANGALIALVVAAAMNIFTYWNSDRMVLSMYGAQEVDERSAPDLYRMVAELAGRASLPMPRVFIMDNPQPNAFATGRNPENAAVAVTTGLMNQLSREELAGVVAHELAHIKNHDTLLMTITATIAGAISMVAQFGMFFGGNRENNNGPGLIGSLALMILAPLGAMLVQMAISRTREYAADEMGARICGQPMWLASALGRIEAAAHQVPNYDAERSPATAHMFIINPLSGQGMDNLFATHPSTDNRVAALQRLAAEIGGSSYRPASTFSRGAGTAASSGTPRGTGRSPWGGQPRGRGPWG.

A run of 2 helical transmembrane segments spans residues 7–24 and 29–46; these read ALLL…GYLI and GALI…FTYW. H130 lines the Zn(2+) pocket. Residue E131 is part of the active site. A Zn(2+)-binding site is contributed by H134. A run of 2 helical transmembrane segments spans residues 145–165 and 172–192; these read ITAT…FFGG and GPGL…AMLV. A Zn(2+)-binding site is contributed by E201. Positions 288-305 are enriched in polar residues; that stretch reads PASTFSRGAGTAASSGTP. The segment at 288-324 is disordered; the sequence is PASTFSRGAGTAASSGTPRGTGRSPWGGQPRGRGPWG.

It belongs to the peptidase M48B family. It depends on Zn(2+) as a cofactor.

The protein resides in the cell inner membrane. The sequence is that of Protease HtpX homolog from Rhodopseudomonas palustris (strain TIE-1).